A 405-amino-acid polypeptide reads, in one-letter code: Angiopoietin-related protein 4 (405 aa).

An N-terminal signal peptide occupies residues 1–23 (MRCAPTAGAALVLCAATAGLLSA). A coiled-coil region spans residues 54-146 (GLREHVERTR…QNLQSQIDLL (93 aa)). N-linked (GlcNAc...) asparagine glycosylation occurs at asparagine 176. The region spanning 178 to 400 (TRLHRPPRDC…ATTLLIQPME (223 aa)) is the Fibrinogen C-terminal domain. Cysteine 187 and cysteine 215 are disulfide-bonded. Asparagine 231 and asparagine 237 each carry an N-linked (GlcNAc...) asparagine glycan. The cysteines at positions 340 and 353 are disulfide-linked.

In terms of assembly, homooligomer; disulfide-linked via Cys residues in the N-terminal part of the protein. The homooligomer undergoes proteolytic processing to release its carboxyl fibrinogen-like domain, which circulates as a monomer. The homooligomer unprocessed form is able to interact with the extracellular matrix. Post-translationally, N-glycosylated. Forms disulfide-linked dimers and tetramers. In terms of processing, cleaved into a smaller N-terminal chain and a larger chain that contains the fibrinogen C-terminal domain; both cleaved and uncleaved forms are detected in the extracellular space. The cleaved form is not present within the cell.

It localises to the secreted. The protein localises to the extracellular space. The protein resides in the extracellular matrix. In terms of biological role, mediates inactivation of the lipoprotein lipase LPL, and thereby plays a role in the regulation of triglyceride clearance from the blood serum and in lipid metabolism. May also play a role in regulating glucose homeostasis and insulin sensitivity. Inhibits proliferation, migration, and tubule formation of endothelial cells and reduces vascular leakage. Upon heterologous expression, inhibits the adhesion of endothelial cell to the extracellular matrix (ECM), and inhibits the reorganization of the actin cytoskeleton, formation of actin stress fibers and focal adhesions in endothelial cells that have adhered to ANGPTL4-containing ECM (in vitro). Depending on context, may modulate tumor-related angiogenesis. Functionally, mediates inactivation of the lipoprotein lipase LPL, and thereby plays an important role in the regulation of triglyceride clearance from the blood serum and in lipid metabolism. Has higher activity in LPL inactivation than the uncleaved protein. The chain is Angiopoietin-related protein 4 (Angptl4) from Rattus norvegicus (Rat).